The following is a 340-amino-acid chain: MAVQMEYEKDVKVAALDGKKIAVIGYGSQGHAHAQNLRDTGHDVIIGVRPGKSFDKAKEDGFDTYTVAEAAKLADVIMILAPDEIQQELYEAEIAPNLEAGNAVGFAHGFNIHFEFIKVPADVDVFMCAPKGPGHLVRRTFEEGFGVPALYAVYQDATGNAKNIAMDWCKGVGAARVGLLETTYKEETEEDLFGEQAVLCGGLTALIEAGFEVLTEAGYAPELAYFEVLHEMKLIVDLIYEGGFKKMRQSISNTAEYGDYVSGPRVITEQVKENMKAVLADIQNGKFANDFVNDYKAGRPKLTAYREQAANLEIEKVGAELRKAMPFVGKNDDDAFKIYN.

In terms of domain architecture, KARI N-terminal Rossmann spans 3 to 182; sequence VQMEYEKDVK…GAARVGLLET (180 aa). NADP(+)-binding positions include 26 to 29, Arg-49, Ser-53, and 83 to 86; these read YGSQ and DEIQ. The active site involves His-108. Gly-134 is a binding site for NADP(+). Residues 183–328 form the KARI C-terminal knotted domain; the sequence is TYKEETEEDL…AELRKAMPFV (146 aa). Mg(2+) is bound by residues Asp-191, Glu-195, Glu-227, and Glu-231. Ser-252 is a binding site for substrate.

Belongs to the ketol-acid reductoisomerase family. The cofactor is Mg(2+).

The enzyme catalyses (2R)-2,3-dihydroxy-3-methylbutanoate + NADP(+) = (2S)-2-acetolactate + NADPH + H(+). It catalyses the reaction (2R,3R)-2,3-dihydroxy-3-methylpentanoate + NADP(+) = (S)-2-ethyl-2-hydroxy-3-oxobutanoate + NADPH + H(+). The protein operates within amino-acid biosynthesis; L-isoleucine biosynthesis; L-isoleucine from 2-oxobutanoate: step 2/4. It functions in the pathway amino-acid biosynthesis; L-valine biosynthesis; L-valine from pyruvate: step 2/4. Functionally, involved in the biosynthesis of branched-chain amino acids (BCAA). Catalyzes an alkyl-migration followed by a ketol-acid reduction of (S)-2-acetolactate (S2AL) to yield (R)-2,3-dihydroxy-isovalerate. In the isomerase reaction, S2AL is rearranged via a Mg-dependent methyl migration to produce 3-hydroxy-3-methyl-2-ketobutyrate (HMKB). In the reductase reaction, this 2-ketoacid undergoes a metal-dependent reduction by NADPH to yield (R)-2,3-dihydroxy-isovalerate. The protein is Ketol-acid reductoisomerase (NADP(+)) of Streptococcus gordonii (strain Challis / ATCC 35105 / BCRC 15272 / CH1 / DL1 / V288).